Consider the following 354-residue polypeptide: Membrane progestin receptor beta (354 aa).

The Cytoplasmic portion of the chain corresponds to Met1–Glu75. Residues Val76–Phe96 form a helical membrane-spanning segment. Topologically, residues Val97–Pro111 are extracellular. The helical transmembrane segment at Leu112 to Leu132 threads the bilayer. Residues Gln133–Arg174 are Cytoplasmic-facing. The helical transmembrane segment at Phe175–Cys195 threads the bilayer. The Extracellular segment spans residues Tyr196–Gln213. Residues Val214–Leu234 form a helical membrane-spanning segment. Over Cys235–Gln243 the chain is Cytoplasmic. Residues Ala244 to Cys264 traverse the membrane as a helical segment. The Extracellular portion of the chain corresponds to Pro265–Gln283. A helical transmembrane segment spans residues Ile284–Tyr304. The Cytoplasmic portion of the chain corresponds to Lys305–Ser319. Residues Ile320–Leu340 form a helical membrane-spanning segment. The Extracellular portion of the chain corresponds to Leu341–Ser354.

It belongs to the ADIPOR family.

Its subcellular location is the cell membrane. In terms of biological role, steroid membrane receptor. Binds progesterone. May be involved in oocyte maturation. The protein is Membrane progestin receptor beta (PAQR8) of Sus scrofa (Pig).